The chain runs to 414 residues: S-adenosylmethionine synthase (414 aa).

His-11 lines the ATP pocket. Asp-13 contacts Mg(2+). Glu-39 is a K(+) binding site. L-methionine is bound by residues Glu-52 and Gln-95. The segment at 95–105 (QSPDIAQGVNL) is flexible loop. ATP is bound by residues 169–171 (DGK), 245–246 (KF), Asp-254, 260–261 (RK), Ala-277, and Lys-281. An L-methionine-binding site is contributed by Asp-254. Lys-285 contacts L-methionine.

The protein belongs to the AdoMet synthase family. As to quaternary structure, homotetramer; dimer of dimers. It depends on Mg(2+) as a cofactor. The cofactor is K(+).

It is found in the cytoplasm. It catalyses the reaction L-methionine + ATP + H2O = S-adenosyl-L-methionine + phosphate + diphosphate. It participates in amino-acid biosynthesis; S-adenosyl-L-methionine biosynthesis; S-adenosyl-L-methionine from L-methionine: step 1/1. Functionally, catalyzes the formation of S-adenosylmethionine (AdoMet) from methionine and ATP. The overall synthetic reaction is composed of two sequential steps, AdoMet formation and the subsequent tripolyphosphate hydrolysis which occurs prior to release of AdoMet from the enzyme. This is S-adenosylmethionine synthase from Synechococcus sp. (strain JA-3-3Ab) (Cyanobacteria bacterium Yellowstone A-Prime).